The sequence spans 129 residues: Glycine cleavage system H protein (129 aa).

Residues 24–106 (TYTVGITEHA…YTDGWIFKIR (83 aa)) form the Lipoyl-binding domain. Residue K65 is modified to N6-lipoyllysine.

It belongs to the GcvH family. In terms of assembly, the glycine cleavage system is composed of four proteins: P, T, L and H. It depends on (R)-lipoate as a cofactor.

Functionally, the glycine cleavage system catalyzes the degradation of glycine. The H protein shuttles the methylamine group of glycine from the P protein to the T protein. The polypeptide is Glycine cleavage system H protein (Enterobacter sp. (strain 638)).